Consider the following 428-residue polypeptide: Proteinase-activated receptor 1 (428 aa).

The first 21 residues, 1–21, serve as a signal peptide directing secretion; sequence MGPQRLLLVAAGLSLCGPLLS. Residues 22–41 constitute a propeptide, removed for receptor activation; sequence SRVPVRQPESEMTDATVNPR. At 42–105 the chain is on the extracellular side; sequence SFFLRNPGEN…SGYLTSPWLR (64 aa). N-linked (GlcNAc...) asparagine glycosylation is found at N65 and N78. Residues 106–131 form a helical membrane-spanning segment; that stretch reads LFIPSVYTFVFVVSLPLNILAIAVFV. At 132–140 the chain is on the cytoplasmic side; that stretch reads LKMKVKKPA. A helical membrane pass occupies residues 141 to 160; that stretch reads VVYMLHLAMADVLFVSVLPL. Topologically, residues 161-179 are extracellular; sequence KISYYFSGSDWQFGSGMCR. Residues C178 and C257 are joined by a disulfide bond. Residues 180 to 201 traverse the membrane as a helical segment; that stretch reads FATAAFYCNMYASIMLMTVISI. Residues 202-221 are Cytoplasmic-facing; it reads DRFLAVVYPIQSLSWRTLGR. A helical membrane pass occupies residues 222–242; sequence ANFTCLVIWVMAIMGVVPLLL. Over 243–271 the chain is Extracellular; the sequence is KEQTTRVPGLNITTCHDVLNETLLQGFYS. N-linked (GlcNAc...) asparagine glycans are attached at residues N253 and N262. A helical transmembrane segment spans residues 272–291; that stretch reads YYFSAFSAVFFLVPLIISTI. Residues 292–314 are Cytoplasmic-facing; sequence CYMSIIRCLSSSSVANRSKKSRA. The helical transmembrane segment at 315 to 337 threads the bilayer; the sequence is LFLSAAVFCVFIVCFGPTNVLLI. Over 338 to 352 the chain is Extracellular; it reads MHYLLLSDSPATEKA. Residues 353 to 377 form a helical membrane-spanning segment; sequence YFAYLLCVCVSSVSCCIDPLIYYYA. At 378–428 the chain is on the cytoplasmic side; the sequence is SSECQRHLYGILCCKESSDPNSYNSTGQLMPSKMDTCSSHLNNSIYKKLLA. S421 bears the Phosphoserine mark.

It belongs to the G-protein coupled receptor 1 family. In terms of processing, proteolytic cleavage by thrombin generates a new N-terminus that functions as a tethered ligand. Also proteolytically cleaved by cathepsin CTSG. Post-translationally, phosphorylated in the C-terminal tail; probably mediating desensitization prior to the uncoupling and internalization of the receptor.

It is found in the cell membrane. Functionally, high affinity receptor that binds the activated thrombin, leading to calcium release from intracellular stores. The thrombin-activated receptor signaling pathway is mediated through PTX-insensitive G proteins, activation of phospholipase C resulting in the production of 1D-myo-inositol 1,4,5-trisphosphate (InsP3) which binds to InsP3 receptors causing calcium release from the stores. In astrocytes, the calcium released into the cytosol allows the Ca(2+)-dependent release of L-glutamate into the synaptic cleft through BEST1, that targets the neuronal postsynaptic GRIN2A/NMDAR receptor resulting in the synaptic plasticity regulation. May play a role in platelets activation and in vascular development. Mediates up-regulation of pro-inflammatory cytokines, such as MCP-1/CCL2 and IL6, triggered by coagulation factor Xa (F10) in cardiac fibroblasts and umbilical vein endothelial cells. This is Proteinase-activated receptor 1 from Cricetulus longicaudatus (Long-tailed dwarf hamster).